We begin with the raw amino-acid sequence, 319 residues long: N-acetyl-D-glucosamine kinase (319 aa).

Residue threonine 14 coordinates ATP. Residues asparagine 37 and aspartate 113 each contribute to the substrate site. Threonine 135 provides a ligand contact to ATP. Substrate is bound by residues 153-155 (GWG) and aspartate 160. Alanine 220 is an ATP binding site.

The protein belongs to the eukaryotic-type N-acetylglucosamine kinase family. Homodimer.

It catalyses the reaction N-acetyl-D-glucosamine + ATP = N-acetyl-D-glucosamine 6-phosphate + ADP + H(+). Converts N-acetylglucosamine (GlcNAc), a major component of complex carbohydrates, into GlcNAc 6-phosphate. Also has ManNAc kinase activity. The polypeptide is N-acetyl-D-glucosamine kinase (nagk) (Dictyostelium discoideum (Social amoeba)).